A 348-amino-acid chain; its full sequence is Rhodopsin (348 aa).

An N-acetylmethionine modification is found at Met-1. Topologically, residues 1–36 (MNGTEGPDFYIPMSNQTGVVRSPFEYPQYYLAEPWQ) are extracellular. N-linked (GlcNAc...) asparagine glycans are attached at residues Asn-2 and Asn-15. The helical transmembrane segment at 37–61 (FSMLAAYMFLLIVLGFPINFLTLYV) threads the bilayer. The Cytoplasmic portion of the chain corresponds to 62–73 (TVQHKKLRTPLN). The chain crosses the membrane as a helical span at residues 74–96 (YILLNLAVADLFMVLGGFTTTLY). The Extracellular portion of the chain corresponds to 97–110 (TSLHGYFVFGPTGC). Cys-110 and Cys-187 are joined by a disulfide. Residues 111–133 (NVEGFFATLGGEIALWSLVVLAI) form a helical membrane-spanning segment. A 'Ionic lock' involved in activated form stabilization motif is present at residues 134–136 (ERY). The Cytoplasmic portion of the chain corresponds to 134–152 (ERYVVVCKPMSNFRFGENH). A helical transmembrane segment spans residues 153 to 173 (AIMGVAFTWIMALACAAPPLV). Residues 174-202 (GWSRYIPEGMQCSCGIDYYTLKPEVNNES) are Extracellular-facing. Residue Glu-201 participates in Zn(2+) binding. A helical transmembrane segment spans residues 203–224 (FVIYMFVVHFTIPLIIIFFCYG). Residues 225-252 (QLVFTVKEAAAQQQESATTQKAEKEVTR) lie on the Cytoplasmic side of the membrane. Residues 253–274 (MVIIMVIAFLICWVPYASVAFY) traverse the membrane as a helical segment. Over 275–286 (IFTHQGSNFGPI) the chain is Extracellular. Gln-279 serves as a coordination point for Zn(2+). A helical transmembrane segment spans residues 287 to 308 (FMTIPAFFAKSSSIYNPVIYIM). Position 296 is an N6-(retinylidene)lysine (Lys-296). Residues 309–348 (MNKQFRNCMLTTICCGKNPLGDDEASATASKTETSQVAPA) are Cytoplasmic-facing. S-palmitoyl cysteine attachment occurs at residues Cys-322 and Cys-323. Residues 330 to 348 (DDEASATASKTETSQVAPA) form an interaction with SAG region. The residue at position 334 (Ser-334) is a Phosphoserine. A Phosphothreonine modification is found at Thr-336. Position 338 is a phosphoserine (Ser-338). 2 positions are modified to phosphothreonine: Thr-340 and Thr-342. Position 343 is a phosphoserine (Ser-343).

The protein belongs to the G-protein coupled receptor 1 family. Opsin subfamily. In terms of assembly, homodimer. May form a complex composed of RHO, GRK1 and RCVRN in a Ca(2+)-dependent manner; RCVRN prevents the interaction between GRK1 and RHO. Interacts with GRK1. Interacts (phosphorylated form) with SAG. Interacts with GNAT1. Interacts with GNAT3. SAG and G-proteins compete for a common binding site. Interacts with PRCD; the interaction promotes PRCD stability. Forms a complex with ASAP1 and ARF4. Forms a complex with ASAP1, RAB11A, Rabin8/RAB3IP, ARF4 and RAB11FIP3; the complex regulates Golgi-to-cilia rhodopsin/RHO transport in photoreceptors. Post-translationally, phosphorylated on some or all of the serine and threonine residues present in the C-terminal region. Contains one covalently linked retinal chromophore. Upon light absorption, the covalently bound 11-cis-retinal is converted to all-trans-retinal. After hydrolysis of the Schiff base and release of the covalently bound all-trans-retinal, active rhodopsin is regenerated by binding of a fresh molecule of 11-cis-retinal.

The protein resides in the membrane. It is found in the cell projection. The protein localises to the cilium. Its subcellular location is the photoreceptor outer segment. Functionally, photoreceptor required for image-forming vision at low light intensity. Required for photoreceptor cell viability after birth. Light-induced isomerization of 11-cis to all-trans retinal triggers a conformational change that activates signaling via G-proteins. Subsequent receptor phosphorylation mediates displacement of the bound G-protein alpha subunit by the arrestin SAG and terminates signaling. The chain is Rhodopsin (RHO) from Oryctolagus cuniculus (Rabbit).